Consider the following 248-residue polypeptide: MQVRNILVALVVVCFAVSEAATQAPTSPPDSSASAEQVAQLLNAPSELDRLKLLKDNQFVFDFKNSKLGVTQSAGGKTVATSRTDFPAVIGHNIAMTVGFIEACGINLPHTHPRATEINFIAKGRFQAGFFLENQATFIGHILEEGMATVFPQGAIHFEINLECEPAMFVAAFNNEDPGVQTTASSFFGLPADVAAVSLNISSIQTVEDLAKYLPHNPAIAMKECMQRCGMTGSSESSESSEDSSCSD.

The N-terminal stretch at 1–20 is a signal peptide; that stretch reads MQVRNILVALVVVCFAVSEA. One can recognise a Cupin type-1 domain in the interval 61 to 207; sequence FDFKNSKLGV…SLNISSIQTV (147 aa). Residues His110, His112, Glu117, and His157 each coordinate Mn(2+). Asn200 carries N-linked (GlcNAc...) asparagine glycosylation.

The protein belongs to the germin family.

Its subcellular location is the secreted. The protein resides in the cell wall. In Physarum polycephalum (Slime mold), this protein is Spherulin-1B.